The sequence spans 24 residues: Grammistin Gs G (24 aa).

Belongs to the grammistin family. Group 1 subfamily. Exists as aggregates of 3-4 molecules. As to expression, expressed by the skin glands.

Its subcellular location is the secreted. Functionally, thanks to its abundant amphiphilic alpha-helices, it may integrate into membrane phospholipids, leading to lysis of the membrane. Its high hemolytic activity is inhibited by phospholipids, but not by cholesterol. Has antibacterial activity with a broad spectrum against various species of bacteria including both Gram-positive and Gram-negative groups. Also has high ichthyotoxic activity. The protein is Grammistin Gs G of Grammistes sexlineatus (Goldenstriped soapfish).